The chain runs to 599 residues: Elongation factor 4 (599 aa).

Residues 2-184 (KHIRNFSIIA…RLVRDIPPPQ (183 aa)) form the tr-type G domain. GTP contacts are provided by residues 14–19 (DHGKST) and 131–134 (NKID).

This sequence belongs to the TRAFAC class translation factor GTPase superfamily. Classic translation factor GTPase family. LepA subfamily.

It is found in the cell inner membrane. The enzyme catalyses GTP + H2O = GDP + phosphate + H(+). Its function is as follows. Required for accurate and efficient protein synthesis under certain stress conditions. May act as a fidelity factor of the translation reaction, by catalyzing a one-codon backward translocation of tRNAs on improperly translocated ribosomes. Back-translocation proceeds from a post-translocation (POST) complex to a pre-translocation (PRE) complex, thus giving elongation factor G a second chance to translocate the tRNAs correctly. Binds to ribosomes in a GTP-dependent manner. The polypeptide is Elongation factor 4 (Yersinia enterocolitica serotype O:8 / biotype 1B (strain NCTC 13174 / 8081)).